Consider the following 489-residue polypeptide: MVALVNNMRKITIPSVGGKLVSSGQFQNFIASCILFCCPGIYLAVTGLGAGGGHPDAYHMADVTNSLLYALFTVCGWAGGPILKYLGPRWALALGATGYPIYIGGLWYFDNTGKQGFTIFTGAYEGIAAGLLWASTAYISLSYSCANQKSQFIATQWTILAFGSTVGSFIAFGINYHSTSTGVPMAVYIIFIIIMACAVLLAILFIKSPSDVRKSDGTSALSPSNKTFGQELWGLFEAAKDWRLLCLLPASFASQSTIAWQSHLNSYYFSLRTRSLNNVLFWVIQFFVPYLFTLILDAKALKRRTRGIIGLTIQAVVIMATLSGELGWIVSKHIDLHDTSPDLDWTQRGYGGALVLYLLMGIQYGSSIVSVQWCISLLSSDPDKYARYAGLYKGTQAAGMCVSFGIDAAGVSFLGQGIIYFIFLFVMCASQLIMTSIFGKETDRLSTKEHFTDDKSYIDGVMPSTDTYMNEKTSDELDKKSLPSDQVYV.

Helical transmembrane passes span 29-49, 67-87, 90-110, 119-139, 152-172, 186-206, 276-296, 308-328, 351-371, 397-417, and 418-438; these read FIAS…TGLG, LLYA…KYLG, WALA…WYFD, IFTG…TAYI, FIAT…FIAF, AVYI…ILFI, LNNV…TLIL, IIGL…ELGW, GGAL…IVSV, AAGM…LGQG, and IIYF…TSIF.

It localises to the membrane. This is an uncharacterized protein from Schizosaccharomyces pombe (strain 972 / ATCC 24843) (Fission yeast).